Here is a 150-residue protein sequence, read N- to C-terminus: Arginine repressor (150 aa).

Belongs to the ArgR family.

Its subcellular location is the cytoplasm. It functions in the pathway amino-acid biosynthesis; L-arginine biosynthesis [regulation]. Regulates arginine biosynthesis genes. This Clostridium botulinum (strain Eklund 17B / Type B) protein is Arginine repressor.